A 220-amino-acid chain; its full sequence is Large ribosomal subunit protein bL21c (220 aa).

It belongs to the bacterial ribosomal protein bL21 family. Part of the 50S ribosomal subunit.

The protein resides in the plastid. It is found in the chloroplast. Functionally, this protein binds to 23S ribosomal RNA in the presence of protein L20. The sequence is that of Large ribosomal subunit protein bL21c (RPL21) from Arabidopsis thaliana (Mouse-ear cress).